The sequence spans 325 residues: Large ribosomal subunit protein uL1m (325 aa).

The transit peptide at Met1–Ala50 directs the protein to the mitochondrion. The segment at Ala47–Lys66 is disordered. The segment covering Gly56–Lys66 has biased composition (basic and acidic residues).

Belongs to the universal ribosomal protein uL1 family.

Its subcellular location is the mitochondrion. This chain is Large ribosomal subunit protein uL1m (MRPL1), found in Bos taurus (Bovine).